A 188-amino-acid polypeptide reads, in one-letter code: Protein GrpE (188 aa).

A compositionally biased stretch (polar residues) spans 1 to 10; the sequence is MPDPTQNPNV. A disordered region spans residues 1–35; that stretch reads MPDPTQNPNVTPELEQHAAPEAAAEAAPESSADVM. A compositionally biased stretch (low complexity) spans 19–32; the sequence is APEAAAEAAPESSA.

Belongs to the GrpE family. As to quaternary structure, homodimer.

The protein localises to the cytoplasm. Its function is as follows. Participates actively in the response to hyperosmotic and heat shock by preventing the aggregation of stress-denatured proteins, in association with DnaK and GrpE. It is the nucleotide exchange factor for DnaK and may function as a thermosensor. Unfolded proteins bind initially to DnaJ; upon interaction with the DnaJ-bound protein, DnaK hydrolyzes its bound ATP, resulting in the formation of a stable complex. GrpE releases ADP from DnaK; ATP binding to DnaK triggers the release of the substrate protein, thus completing the reaction cycle. Several rounds of ATP-dependent interactions between DnaJ, DnaK and GrpE are required for fully efficient folding. The sequence is that of Protein GrpE from Azoarcus sp. (strain BH72).